Reading from the N-terminus, the 786-residue chain is ATP-dependent RNA helicase SUPV3L1, mitochondrial (786 aa).

A mitochondrion-targeting transit peptide spans 1-22; it reads MSFSRALLWARLPAGRQAGHRA. At K99 the chain carries N6-acetyllysine. The Helicase ATP-binding domain maps to 194-334; the sequence is DARAMQRKII…AIDLVMELMY (141 aa). 207–214 is a binding site for ATP; it reads GPTNSGKT. At K220 the chain carries N6-acetyllysine. The 166-residue stretch at 353 to 518 folds into the Helicase C-terminal domain; the sequence is VLDHALESLD…GLHPTAEQIE (166 aa). Residues 650–786 are interaction with LAMTOR5, important for protein stability; the sequence is PDASLIRDLQ…RRKKKEPDSD (137 aa). Disordered regions lie at residues 690-730 and 749-786; these read GFPS…DAGE and KQLE…PDSD. Over residues 693-705 the composition is skewed to polar residues; it reads SGSQSRLSGTLKS. The residue at position 725 (S725) is a Phosphoserine. Positions 749–771 are enriched in basic and acidic residues; sequence KQLEKEWMTQQTEHNKEKTESGT.

This sequence belongs to the helicase family. Homodimer; in free form. Component of the mitochondrial degradosome (mtEXO) complex which is a heteropentamer containing 2 copies of SUPV3L1 and 3 copies of PNPT1. As part of mitochondrial degradosome complex, interacts with GRSF1 in a RNA-dependent manner; the interaction enhances the activity of the complex. Interacts with LAMTOR5/HBXIP, WRN and BLM. It depends on Mg(2+) as a cofactor. Requires Mn(2+) as cofactor. As to expression, broadly expressed.

It is found in the nucleus. The protein resides in the mitochondrion matrix. The protein localises to the mitochondrion nucleoid. It catalyses the reaction ATP + H2O = ADP + phosphate + H(+). Helicase activity toward DNA substrate is inhibited by micromolar concentrations of 5,6-dichloro-1-(beta-D-ribofuranosyl)benzotriazole (DRBT) and 4,5,6,7-tetrabromobenzotriazole (TBBT). Helicase activity toward RNA substrate is inhibited by elevated concentrations of TBBT. Inhibited by some ring-expanded nucleoside analogs. Major helicase player in mitochondrial RNA metabolism. Component of the mitochondrial degradosome (mtEXO) complex, that degrades 3' overhang double-stranded RNA with a 3'-to-5' directionality in an ATP-dependent manner. Involved in the degradation of non-coding mitochondrial transcripts (MT-ncRNA) and tRNA-like molecules. ATPase and ATP-dependent multisubstrate helicase, able to unwind double-stranded (ds) DNA and RNA, and RNA/DNA heteroduplexes in the 5'-to-3' direction. Plays a role in the RNA surveillance system in mitochondria; regulates the stability of mature mRNAs, the removal of aberrantly formed mRNAs and the rapid degradation of non coding processing intermediates. Also implicated in recombination and chromatin maintenance pathways. May protect cells from apoptosis. Associates with mitochondrial DNA. This Homo sapiens (Human) protein is ATP-dependent RNA helicase SUPV3L1, mitochondrial (SUPV3L1).